The following is a 1556-amino-acid chain: Ras guanine nucleotide exchange factor G (1556 aa).

Disordered regions lie at residues 19–63, 93–141, 163–239, and 254–296; these read IGNI…KNRG, LQLN…SSTT, SHVT…LSPS, and ATDS…NNNS. Low complexity-rich tracts occupy residues 25 to 54 and 96 to 141; these read NNNNSNNNSNNNSVSNSNNNSSISINSGSN and NDTD…SSTT. The segment covering 170–186 has biased composition (acidic residues); that stretch reads DDDDDDESSSSEEDFDS. Over residues 196–216 the composition is skewed to low complexity; the sequence is TSSTTATTTTTTTSVSPLTSS. Residues 256–271 are compositionally biased toward polar residues; that stretch reads DSDNQSLEPCNNKTIV. The segment covering 279–295 has biased composition (low complexity); it reads DNNNNHNNNNNNNNNNN. The region spanning 307 to 353 is the F-box 1 domain; sequence NKTFLDLDEKIYLKIFGYLFAEDLCSINRVSKHLCNIINNQQLWKDL. The tract at residues 385-416 is disordered; the sequence is NNNNNNNNNNNNNNNNSNISNNNNNINNSNGN. An F-box 2 domain is found at 679-726; that stretch reads VFDISRVSDILLIKIFRNLDSIKDLSVCQRVSKRWNKAIAISSLWEQL. 2 disordered regions span residues 762 to 815 and 827 to 1101; these read QPSP…NGLN and GSNL…ITNN. The span at 827–848 shows a compositional bias: low complexity; it reads GSNLSNGGNSGSSFSPFNPLSG. Residues 849 to 866 show a composition bias toward gly residues; sequence SNGGSSFGPFGSGGGGGS. Low complexity-rich tracts occupy residues 867–880 and 888–910; these read NSNIGGSSNQLNSS and FLAMASGGSSVSSVTSTPSTIST. A compositionally biased stretch (polar residues) spans 911 to 935; that stretch reads NCTPTGGSTTNSPNFQSPMVSSSTV. Composition is skewed to low complexity over residues 943–957 and 972–1053; these read SPNLSSPRSMSISLS and PDSS…IQPI. A compositionally biased stretch (polar residues) spans 1059-1076; the sequence is VNNNGSQSDLSKISDLNA. The span at 1077 to 1101 shows a compositional bias: low complexity; sequence NPNTTTTTTTNTIESSSSSSSITNN. Positions 1116–1244 constitute an N-terminal Ras-GEF domain; the sequence is MINVQKLMNL…LIRSFSRKLS (129 aa). Positions 1254 to 1279 are disordered; it reads IGITGGKSSRKGGGSGSGSGSGGGSG. The segment covering 1264-1279 has biased composition (gly residues); sequence KGGGSGSGSGSGGGSG. The Ras-GEF domain occupies 1317–1548; sequence PAEEIAKQLT…YRVSMQREPR (232 aa).

Its function is as follows. Promotes the exchange of Ras-bound GDP by GTP. This Dictyostelium discoideum (Social amoeba) protein is Ras guanine nucleotide exchange factor G (gefG).